Reading from the N-terminus, the 783-residue chain is ATP-dependent 6-phosphofructokinase (783 aa).

Over residues M1–P10 the composition is skewed to pro residues. The segment at M1–T20 is disordered. Positions M1 to T389 are N-terminal catalytic PFK domain 1. Residues G23, R86–C87, and G116–S119 each bind ATP. Residue D117 participates in Mg(2+) binding. Substrate contacts are provided by residues S162–D164, R199, M206–R208, E263, R291, and H297–R300. D164 acts as the Proton acceptor in catalysis. Residues P390–M403 form an interdomain linker region. Residues R404–A783 form a C-terminal regulatory PFK domain 2 region. Beta-D-fructose 2,6-bisphosphate is bound by residues R480, T537–N541, R575, Q582–G584, E642, R668, H674–Q677, and R749.

This sequence belongs to the phosphofructokinase type A (PFKA) family. ATP-dependent PFK group I subfamily. Eukaryotic two domain clade 'E' sub-subfamily. Homotetramer. The cofactor is Mg(2+).

The protein resides in the cytoplasm. It carries out the reaction beta-D-fructose 6-phosphate + ATP = beta-D-fructose 1,6-bisphosphate + ADP + H(+). The protein operates within carbohydrate degradation; glycolysis; D-glyceraldehyde 3-phosphate and glycerone phosphate from D-glucose: step 3/4. With respect to regulation, allosterically activated by ADP, AMP, or fructose 2,6-bisphosphate, and allosterically inhibited by ATP or citrate. Catalyzes the phosphorylation of D-fructose 6-phosphate to fructose 1,6-bisphosphate by ATP, the first committing step of glycolysis. The polypeptide is ATP-dependent 6-phosphofructokinase (pfkA) (Aspergillus niger).